The primary structure comprises 252 residues: Phosphoribosylformylglycinamidine synthase subunit PurQ (252 aa).

The Glutamine amidotransferase type-1 domain maps to 6–237 (VGVVVFPGSN…FAHLAGTKRS (232 aa)). C89 (nucleophile) is an active-site residue. Active-site residues include H206 and E208.

In terms of assembly, part of the FGAM synthase complex composed of 1 PurL, 1 PurQ and 2 PurS subunits.

It localises to the cytoplasm. It carries out the reaction N(2)-formyl-N(1)-(5-phospho-beta-D-ribosyl)glycinamide + L-glutamine + ATP + H2O = 2-formamido-N(1)-(5-O-phospho-beta-D-ribosyl)acetamidine + L-glutamate + ADP + phosphate + H(+). It catalyses the reaction L-glutamine + H2O = L-glutamate + NH4(+). Its pathway is purine metabolism; IMP biosynthesis via de novo pathway; 5-amino-1-(5-phospho-D-ribosyl)imidazole from N(2)-formyl-N(1)-(5-phospho-D-ribosyl)glycinamide: step 1/2. In terms of biological role, part of the phosphoribosylformylglycinamidine synthase complex involved in the purines biosynthetic pathway. Catalyzes the ATP-dependent conversion of formylglycinamide ribonucleotide (FGAR) and glutamine to yield formylglycinamidine ribonucleotide (FGAM) and glutamate. The FGAM synthase complex is composed of three subunits. PurQ produces an ammonia molecule by converting glutamine to glutamate. PurL transfers the ammonia molecule to FGAR to form FGAM in an ATP-dependent manner. PurS interacts with PurQ and PurL and is thought to assist in the transfer of the ammonia molecule from PurQ to PurL. This is Phosphoribosylformylglycinamidine synthase subunit PurQ from Chlorobaculum parvum (strain DSM 263 / NCIMB 8327) (Chlorobium vibrioforme subsp. thiosulfatophilum).